The sequence spans 307 residues: tRNA pseudouridine synthase B (307 aa).

The active-site Nucleophile is the Asp38.

The protein belongs to the pseudouridine synthase TruB family. Type 1 subfamily.

The enzyme catalyses uridine(55) in tRNA = pseudouridine(55) in tRNA. In terms of biological role, responsible for synthesis of pseudouridine from uracil-55 in the psi GC loop of transfer RNAs. This Bacillus thuringiensis (strain Al Hakam) protein is tRNA pseudouridine synthase B.